The sequence spans 131 residues: Profilin-2 (131 aa).

The protein belongs to the profilin family. In terms of assembly, occurs in many kinds of cells as a complex with monomeric actin in a 1:1 ratio. In terms of tissue distribution, expressed in the intestinal wall, the spermatheca, and the pharynx.

Its subcellular location is the cytoplasm. It localises to the cytoskeleton. Binds to actin and affects the structure of the cytoskeleton. At high concentrations, profilin prevents the polymerization of actin, whereas it enhances it at low concentrations. By binding to PIP2, it inhibits the formation of IP3 and DG. This chain is Profilin-2 (pfn-2), found in Caenorhabditis elegans.